Reading from the N-terminus, the 276-residue chain is Lipoyl synthase (276 aa).

Positions 27, 32, 38, 53, 57, 60, and 266 each coordinate [4Fe-4S] cluster. The 217-residue stretch at 39 to 255 folds into the Radical SAM core domain; that stretch reads FGNKTATFMI…EEIGYEMGFK (217 aa).

It belongs to the radical SAM superfamily. Lipoyl synthase family. [4Fe-4S] cluster serves as cofactor.

It localises to the cytoplasm. The catalysed reaction is [[Fe-S] cluster scaffold protein carrying a second [4Fe-4S](2+) cluster] + N(6)-octanoyl-L-lysyl-[protein] + 2 oxidized [2Fe-2S]-[ferredoxin] + 2 S-adenosyl-L-methionine + 4 H(+) = [[Fe-S] cluster scaffold protein] + N(6)-[(R)-dihydrolipoyl]-L-lysyl-[protein] + 4 Fe(3+) + 2 hydrogen sulfide + 2 5'-deoxyadenosine + 2 L-methionine + 2 reduced [2Fe-2S]-[ferredoxin]. Its pathway is protein modification; protein lipoylation via endogenous pathway; protein N(6)-(lipoyl)lysine from octanoyl-[acyl-carrier-protein]: step 2/2. In terms of biological role, catalyzes the radical-mediated insertion of two sulfur atoms into the C-6 and C-8 positions of the octanoyl moiety bound to the lipoyl domains of lipoate-dependent enzymes, thereby converting the octanoylated domains into lipoylated derivatives. This Aquifex aeolicus (strain VF5) protein is Lipoyl synthase.